The primary structure comprises 294 residues: ATP phosphoribosyltransferase (294 aa).

This sequence belongs to the ATP phosphoribosyltransferase family. Long subfamily. Requires Mg(2+) as cofactor.

It is found in the cytoplasm. It catalyses the reaction 1-(5-phospho-beta-D-ribosyl)-ATP + diphosphate = 5-phospho-alpha-D-ribose 1-diphosphate + ATP. It functions in the pathway amino-acid biosynthesis; L-histidine biosynthesis; L-histidine from 5-phospho-alpha-D-ribose 1-diphosphate: step 1/9. Its activity is regulated as follows. Feedback inhibited by histidine. Catalyzes the condensation of ATP and 5-phosphoribose 1-diphosphate to form N'-(5'-phosphoribosyl)-ATP (PR-ATP). Has a crucial role in the pathway because the rate of histidine biosynthesis seems to be controlled primarily by regulation of HisG enzymatic activity. This chain is ATP phosphoribosyltransferase, found in Pelodictyon phaeoclathratiforme (strain DSM 5477 / BU-1).